A 56-amino-acid polypeptide reads, in one-letter code: Large ribosomal subunit protein bL32 (56 aa).

The span at 1–16 shows a compositional bias: basic residues; it reads MAVQKSKKSRSRRGMR. Positions 1 to 38 are disordered; sequence MAVQKSKKSRSRRGMRRSHDAVTPENLSVDPVSGETHR.

The protein belongs to the bacterial ribosomal protein bL32 family.

The chain is Large ribosomal subunit protein bL32 from Colwellia psychrerythraea (strain 34H / ATCC BAA-681) (Vibrio psychroerythus).